The chain runs to 734 residues: MALRFPRFSQGLAQDPTTRRIWFGIATAHDFESHDDITEERLYQNIFASHFGQLAIIFLWTSGNLFHVAWQGNFETWVQDPLHVRPIAHAIWDPHFGQPAVEAFTRGGALGPVNIAYSGVYQWWYTIGLRTNEDLYTGALFLLFLSAISLIGGWLHLQPKWKPRVSWFKNAESRLNHHLSGLFGVSSLAWTGHLVHVAIPASRGEYVRWNNLLNVLPHPQGLGPLFTGQWNLYAQNPDSSSHLFGTSQGSGTAILTLLGGFHPQTQSLWLTDIAHHHLAIAILFLIAGHMYRTNFGIGHSIKDLLEAHIPPGGRLGRGHKGLYDTINNSIHFQLGLALASLGVITSLVAQHMYSLPAYAFIAQDFTTQAALYTHHQYIAGFIMTGAFAHGAIFFIRDYNPEQNEDNVLARMLDHKEAIISHLSWASLFLGFHTLGLYVHNDVMLAFGTPEKQILIEPIFAQWIQSAHGKTSYGFDVLLSSTNGPAFNAGRSIWLPGWLNAINENSNSLFLTIGPGDFLVHHAIALGLHTTTLILVKGALDARGSKLMPDKKDFGYSFPCDGPGRGGTCDISAWDAFYLAVFWMLNTIGWVTFYWHWKHITLWQGNVSQFNESSTYLMGWLRDYLWLNSSQLINGYNPFGMNSLSVWAWMFLFGHLVWATGFMFLISWRGYWQELIETLAWAHERTPLANLIRWKDKPVALSIVQARLVGLAHFSVGYIFTYAAFLIASTSGKFG.

Helical transmembrane passes span 46-69 (IFAS…FHVA), 135-158 (LYTG…LHLQ), 175-199 (LNHH…HVAI), 273-291 (IAHH…GHMY), 330-353 (IHFQ…QHMY), 369-395 (AALY…IFFI), 417-439 (AIIS…LYVH), and 517-535 (FLVH…LILV). [4Fe-4S] cluster is bound by residues cysteine 559 and cysteine 568. 2 helical membrane-spanning segments follow: residues 575–596 (AFYL…YWHW) and 643–665 (LSVW…MFLI). Chlorophyll a-binding residues include histidine 654, methionine 662, and tyrosine 670. Tryptophan 671 is a phylloquinone binding site. A helical membrane pass occupies residues 707–727 (LVGLAHFSVGYIFTYAAFLIA).

This sequence belongs to the PsaA/PsaB family. As to quaternary structure, the PsaA/B heterodimer binds the P700 chlorophyll special pair and subsequent electron acceptors. PSI consists of a core antenna complex that captures photons, and an electron transfer chain that converts photonic excitation into a charge separation. The eukaryotic PSI reaction center is composed of at least 11 subunits. P700 is a chlorophyll a/chlorophyll a' dimer, A0 is one or more chlorophyll a, A1 is one or both phylloquinones and FX is a shared 4Fe-4S iron-sulfur center. serves as cofactor.

The protein resides in the plastid. It is found in the chloroplast thylakoid membrane. The catalysed reaction is reduced [plastocyanin] + hnu + oxidized [2Fe-2S]-[ferredoxin] = oxidized [plastocyanin] + reduced [2Fe-2S]-[ferredoxin]. Functionally, psaA and PsaB bind P700, the primary electron donor of photosystem I (PSI), as well as the electron acceptors A0, A1 and FX. PSI is a plastocyanin-ferredoxin oxidoreductase, converting photonic excitation into a charge separation, which transfers an electron from the donor P700 chlorophyll pair to the spectroscopically characterized acceptors A0, A1, FX, FA and FB in turn. Oxidized P700 is reduced on the lumenal side of the thylakoid membrane by plastocyanin. The chain is Photosystem I P700 chlorophyll a apoprotein A2 from Aethionema cordifolium (Lebanon stonecress).